The sequence spans 644 residues: Transcription factor btd (644 aa).

Disordered stretches follow at residues 16 to 65 and 101 to 196; these read HQAQ…TQQQ and APPS…AGSP. Composition is skewed to low complexity over residues 101-119 and 140-196; these read APPSLSGSSSGSSSGSSPL and ASPN…AGSP. C2H2-type zinc fingers lie at residues 333–357, 363–385, and 391–413; these read HICHIPGCERLYGKASHLKTHLRWH, FLCLTCGKRFSRSDELQRHGRTH, and YACPICSKKFSRSDHLSKHKKTH. Disordered regions lie at residues 437 to 461 and 478 to 537; these read LEKKEKKSGKPLTPPVEFKQEQPDT and TSAG…SSSA. Low complexity-rich tracts occupy residues 499–508 and 521–537; these read TTTTSSAAAS and AIQPATTSASSSSSSSA.

It is found in the nucleus. In terms of biological role, required for the development of the antennal, intercalary and mandibular segments of the head. In Drosophila melanogaster (Fruit fly), this protein is Transcription factor btd (btd).